A 507-amino-acid polypeptide reads, in one-letter code: Secreted lipase ARB_01498 (507 aa).

The N-terminal stretch at 1–21 (MFVQLLTYGLVAASTLQGVFA) is a signal peptide. Serine 196 serves as the catalytic Acyl-ester intermediate. Residues asparagine 262, asparagine 321, asparagine 358, and asparagine 416 are each glycosylated (N-linked (GlcNAc...) asparagine).

This sequence belongs to the type-B carboxylesterase/lipase family.

It is found in the secreted. It catalyses the reaction a triacylglycerol + H2O = a diacylglycerol + a fatty acid + H(+). This Arthroderma benhamiae (strain ATCC MYA-4681 / CBS 112371) (Trichophyton mentagrophytes) protein is Secreted lipase ARB_01498.